The primary structure comprises 244 residues: Ribonuclease PH (244 aa).

Phosphate-binding positions include arginine 87 and 125–127; that span reads GTR.

It belongs to the RNase PH family. Homohexameric ring arranged as a trimer of dimers.

It carries out the reaction tRNA(n+1) + phosphate = tRNA(n) + a ribonucleoside 5'-diphosphate. In terms of biological role, phosphorolytic 3'-5' exoribonuclease that plays an important role in tRNA 3'-end maturation. Removes nucleotide residues following the 3'-CCA terminus of tRNAs; can also add nucleotides to the ends of RNA molecules by using nucleoside diphosphates as substrates, but this may not be physiologically important. Probably plays a role in initiation of 16S rRNA degradation (leading to ribosome degradation) during starvation. The protein is Ribonuclease PH of Synechococcus sp. (strain JA-2-3B'a(2-13)) (Cyanobacteria bacterium Yellowstone B-Prime).